Consider the following 324-residue polypeptide: Probable UDP-sugar transporter protein SLC35A4 (324 aa).

Over 1 to 18 (MSVEDGGMPGLGRPRQAR) the chain is Cytoplasmic. The helical transmembrane segment at 19-39 (WTLMLLLSTAMYGAHAPLLAL) threads the bilayer. Topologically, residues 40–52 (CHVDGRVPFRPSS) are lumenal. A helical transmembrane segment spans residues 53–73 (AVLLTELTKLLLCAFSLLVGW). The Cytoplasmic segment spans residues 74 to 85 (QAWPQGPPPWRQ). Residues 86–106 (AAPFALSALLYGANNNLVIYL) traverse the membrane as a helical segment. Over 107-142 (QRYMDPSTYQVLSNLKIGSTAVLYCLCLRHRLSVRQ) the chain is Lumenal. Residues 143-163 (GLALLLLMAAGACYAAGGLQV) traverse the membrane as a helical segment. Residues 164 to 180 (PGNTLPSPPPAAAASPM) lie on the Cytoplasmic side of the membrane. A helical transmembrane segment spans residues 181–201 (PLHITPLGLLLLILYCLISGL). The Lumenal segment spans residues 202–214 (SSVYTELLMKRQR). A helical transmembrane segment spans residues 215–235 (LPLALQNLFLYTFGVLLNLGL). The Cytoplasmic portion of the chain corresponds to 236 to 250 (HAGGGSGPGLLEGFS). The helical transmembrane segment at 251–271 (GWAALVVLSQALNGLLMSAVM) threads the bilayer. The Lumenal portion of the chain corresponds to 272-275 (KHGS). A helical transmembrane segment spans residues 276-298 (SITRLFVVSCSLVVNAVLSAVLL). The Cytoplasmic segment spans residues 299–324 (RLQLTAAFFLATLLIGLAMRLYYGSR).

The protein belongs to the nucleotide-sugar transporter family. SLC35A subfamily. In terms of assembly, found in a complex with SLC35A2 and SLC35A3.

It is found in the golgi apparatus membrane. It catalyses the reaction CDP-L-ribitol(in) + CDP(out) = CDP-L-ribitol(out) + CDP(in). Mediates the transport of CDP-ribitol. Does not exhibit CMP-sialic acid, UDP-galactose and UDP-N-acetylglucosamine transport activity. This chain is Probable UDP-sugar transporter protein SLC35A4, found in Homo sapiens (Human).